A 420-amino-acid chain; its full sequence is Histidine--tRNA ligase (420 aa).

It belongs to the class-II aminoacyl-tRNA synthetase family. In terms of assembly, homodimer.

It is found in the cytoplasm. It carries out the reaction tRNA(His) + L-histidine + ATP = L-histidyl-tRNA(His) + AMP + diphosphate + H(+). The protein is Histidine--tRNA ligase of Desulforudis audaxviator (strain MP104C).